A 659-amino-acid chain; its full sequence is DNA ligase (659 aa).

NAD(+)-binding positions include 32–36, 81–82, and E110; these read DAEYD and SL. K112 acts as the N6-AMP-lysine intermediate in catalysis. NAD(+) is bound by residues R133, E168, K284, and K308. Positions 402, 405, 420, and 425 each coordinate Zn(2+). The BRCT domain occupies 582–659; sequence AKPQIFAGKS…SEEEFAELLP (78 aa).

This sequence belongs to the NAD-dependent DNA ligase family. LigA subfamily. The cofactor is Mg(2+). It depends on Mn(2+) as a cofactor.

It carries out the reaction NAD(+) + (deoxyribonucleotide)n-3'-hydroxyl + 5'-phospho-(deoxyribonucleotide)m = (deoxyribonucleotide)n+m + AMP + beta-nicotinamide D-nucleotide.. DNA ligase that catalyzes the formation of phosphodiester linkages between 5'-phosphoryl and 3'-hydroxyl groups in double-stranded DNA using NAD as a coenzyme and as the energy source for the reaction. It is essential for DNA replication and repair of damaged DNA. The polypeptide is DNA ligase (Desulfitobacterium hafniense (strain Y51)).